The primary structure comprises 289 residues: ATP synthase gamma chain (289 aa).

The protein belongs to the ATPase gamma chain family. As to quaternary structure, F-type ATPases have 2 components, CF(1) - the catalytic core - and CF(0) - the membrane proton channel. CF(1) has five subunits: alpha(3), beta(3), gamma(1), delta(1), epsilon(1). CF(0) has three main subunits: a, b and c.

It localises to the cell inner membrane. In terms of biological role, produces ATP from ADP in the presence of a proton gradient across the membrane. The gamma chain is believed to be important in regulating ATPase activity and the flow of protons through the CF(0) complex. In Erwinia tasmaniensis (strain DSM 17950 / CFBP 7177 / CIP 109463 / NCPPB 4357 / Et1/99), this protein is ATP synthase gamma chain.